Here is a 59-residue protein sequence, read N- to C-terminus: Potassium channel toxin alpha-KTx 1.2 (59 aa).

The first 22 residues, 1–22 (MKILSVLLLALIICSIIDWSEG), serve as a signal peptide directing secretion. Pyrrolidone carboxylic acid is present on Gln-23. 3 cysteine pairs are disulfide-bonded: Cys-29-Cys-50, Cys-35-Cys-55, and Cys-39-Cys-57. The interaction with Ca(2+)-activated K(+) channels stretch occupies residues 48 to 55 (GKCMNKKC).

Belongs to the short scorpion toxin superfamily. Potassium channel inhibitor family. Alpha-KTx 01 subfamily. In terms of tissue distribution, expressed by the venom gland.

Its subcellular location is the secreted. Its function is as follows. Blocks calcium-activated potassium channels (Kd=43 nM on KCa1.1/KCNMA1). Has a potent presynaptic facilitatory action, with less effect on direct muscle stimulation. The polypeptide is Potassium channel toxin alpha-KTx 1.2 (Leiurus hebraeus (Hebrew deathstalker scorpion)).